The sequence spans 188 residues: Putative pre-16S rRNA nuclease (188 aa).

A disordered region spans residues 156–188 (LRQGDAAPGGSDDERDEDGDTDGEDGGGDGGGE). The span at 166-188 (SDDERDEDGDTDGEDGGGDGGGE) shows a compositional bias: acidic residues.

It belongs to the YqgF nuclease family.

Its subcellular location is the cytoplasm. Its function is as follows. Could be a nuclease involved in processing of the 5'-end of pre-16S rRNA. In Rhodospirillum centenum (strain ATCC 51521 / SW), this protein is Putative pre-16S rRNA nuclease.